Consider the following 196-residue polypeptide: Probable signal peptidase I-1 (196 aa).

Residues M1–N16 are Cytoplasmic-facing. Residues I17–A35 form a helical membrane-spanning segment. Residues E36–T196 are Periplasmic-facing. Residues S44 and K94 contribute to the active site.

Belongs to the peptidase S26 family.

Its subcellular location is the cell membrane. It catalyses the reaction Cleavage of hydrophobic, N-terminal signal or leader sequences from secreted and periplasmic proteins.. This Synechocystis sp. (strain ATCC 27184 / PCC 6803 / Kazusa) protein is Probable signal peptidase I-1 (lepB1).